The chain runs to 154 residues: Ribosome maturation factor RimP (154 aa).

The protein belongs to the RimP family.

It localises to the cytoplasm. Functionally, required for maturation of 30S ribosomal subunits. In Desulforudis audaxviator (strain MP104C), this protein is Ribosome maturation factor RimP.